The chain runs to 235 residues: Peptidyl-tRNA hydrolase (235 aa).

Tyr-14 is a tRNA binding site. Catalysis depends on His-19, which acts as the Proton acceptor. Residues Phe-64, Asn-66, and Asn-112 each contribute to the tRNA site. The interval 188-235 (APARNSGTRPDNPGKGSPEKPAAKPANDPIAEPPSLSDRLRALTERFR) is disordered. Residues 225 to 235 (DRLRALTERFR) show a composition bias toward basic and acidic residues.

The protein belongs to the PTH family. Monomer.

It is found in the cytoplasm. The catalysed reaction is an N-acyl-L-alpha-aminoacyl-tRNA + H2O = an N-acyl-L-amino acid + a tRNA + H(+). In terms of biological role, hydrolyzes ribosome-free peptidyl-tRNAs (with 1 or more amino acids incorporated), which drop off the ribosome during protein synthesis, or as a result of ribosome stalling. Its function is as follows. Catalyzes the release of premature peptidyl moieties from peptidyl-tRNA molecules trapped in stalled 50S ribosomal subunits, and thus maintains levels of free tRNAs and 50S ribosomes. In Paracoccus denitrificans (strain Pd 1222), this protein is Peptidyl-tRNA hydrolase.